Consider the following 314-residue polypeptide: tRNA-cytidine(32) 2-sulfurtransferase (314 aa).

The PP-loop motif signature appears at 49 to 54; the sequence is SGGKDS. Residues cysteine 124, cysteine 127, and cysteine 215 each coordinate [4Fe-4S] cluster.

It belongs to the TtcA family. As to quaternary structure, homodimer. Mg(2+) is required as a cofactor. The cofactor is [4Fe-4S] cluster.

It localises to the cytoplasm. It catalyses the reaction cytidine(32) in tRNA + S-sulfanyl-L-cysteinyl-[cysteine desulfurase] + AH2 + ATP = 2-thiocytidine(32) in tRNA + L-cysteinyl-[cysteine desulfurase] + A + AMP + diphosphate + H(+). It participates in tRNA modification. Functionally, catalyzes the ATP-dependent 2-thiolation of cytidine in position 32 of tRNA, to form 2-thiocytidine (s(2)C32). The sulfur atoms are provided by the cysteine/cysteine desulfurase (IscS) system. The protein is tRNA-cytidine(32) 2-sulfurtransferase of Histophilus somni (strain 2336) (Haemophilus somnus).